Here is a 329-residue protein sequence, read N- to C-terminus: MDPQCTMGLSNILFVMAFLLSGAAPLKIQAYFNETADLPCQFANSQNQSLSELVVFWQDQENLVLNEVYLGKEKFDSVHSKYMGRTSFDSDSWTLRLHNLQIKDKGLYQCIIHHKKPTGMIRIHQMNSELSVLANFSQPEIVPISNITENVYINLTCSSIHGYPEPKKMSVLLRTKNSTIEYDGVMQKSQDNVTELYDVSISLSVSFPDVTSNMTIFCILETDKTRLLSSPFSIELEDPQPPPDHIPWITAVLPTVIICVMVFCLILWKWKKKKRPRNSYKCGTNTMEREESEQTKKREKIHIPERSDEAQRVFKSSKTSSCDKSDTCF.

An N-terminal signal peptide occupies residues 1 to 23 (MDPQCTMGLSNILFVMAFLLSGA). The Extracellular portion of the chain corresponds to 24–247 (APLKIQAYFN…DPQPPPDHIP (224 aa)). Asparagine 33, asparagine 47, asparagine 135, asparagine 146, asparagine 154, asparagine 177, asparagine 192, and asparagine 213 each carry an N-linked (GlcNAc...) asparagine glycan. Residues 33-131 (NETADLPCQF…RIHQMNSELS (99 aa)) form the Ig-like V-type domain. An intrachain disulfide couples cysteine 40 to cysteine 110. Residues 150-225 (NVYINLTCSS…IFCILETDKT (76 aa)) enclose the Ig-like C2-type domain. Residues cysteine 157 and cysteine 218 are joined by a disulfide bond. The chain crosses the membrane as a helical span at residues 248–268 (WITAVLPTVIICVMVFCLILW). Residues 269 to 329 (KWKKKKRPRN…SSCDKSDTCF (61 aa)) lie on the Cytoplasmic side of the membrane. Residues 277–329 (RNSYKCGTNTMEREESEQTKKREKIHIPERSDEAQRVFKSSKTSSCDKSDTCF) are disordered. Residues 287–312 (MEREESEQTKKREKIHIPERSDEAQR) are compositionally biased toward basic and acidic residues.

In terms of assembly, homodimer. Interacts with MARCH8. Interacts (via cytoplasmic domain) with PHB1 and PHB2; the interactions increases after priming with CD40. Interacts with CD28. (Microbial infection) Interacts with adenovirus subgroup b fiber protein. As to quaternary structure, (Microbial infection) Interacts with Orthopoxvirus OPG038/M2 protein, inhibiting the interaction with CTLA4 and CD28. Polyubiquitinated; which is promoted by MARCH8 and results in endocytosis and lysosomal degradation. As to expression, expressed by activated B-lymphocytes and monocytes.

It localises to the cell membrane. Receptor involved in the costimulatory signal essential for T-lymphocyte proliferation and interleukin-2 production, by binding CD28 or CTLA-4. May play a critical role in the early events of T-cell activation and costimulation of naive T-cells, such as deciding between immunity and anergy that is made by T-cells within 24 hours after activation. Also involved in the regulation of B cells function, plays a role in regulating the level of IgG(1) produced. Upon CD40 engagement, activates NF-kappa-B signaling pathway via phospholipase C and protein kinase C activation. In terms of biological role, interferes with the formation of CD86 clusters, and thus acts as a negative regulator of T-cell activation. Functionally, (Microbial infection) Acts as a receptor for adenovirus subgroup B. This Homo sapiens (Human) protein is T-lymphocyte activation antigen CD86 (CD86).